A 457-amino-acid polypeptide reads, in one-letter code: Nuclear hormone receptor family member nhr-20 (457 aa).

A DNA-binding region (nuclear receptor) is located at residues 16–92 (TSKCLVCEHP…AGMRRECVQK (77 aa)). 2 consecutive NR C4-type zinc fingers follow at residues 19 to 40 (CLVCEHPDGGSAHFGSTSCLAC) and 56 to 80 (CKKDKNCVIFHELRMICRACRFDKC). The tract at residues 125–182 (GDQTDDNSPLSIEKKSPPGLLPNDSPMMADFKFDPSDIPSTSGGSTQRLERSPSPKLA) is disordered. A compositionally biased stretch (polar residues) spans 162-171 (IPSTSGGSTQ). Positions 201-457 (QLKNSMDRRR…DALSKSLLTL (257 aa)) constitute an NR LBD domain.

It belongs to the nuclear hormone receptor family.

Its subcellular location is the nucleus. Its function is as follows. Orphan nuclear receptor. In Caenorhabditis elegans, this protein is Nuclear hormone receptor family member nhr-20 (nhr-20).